The following is a 459-amino-acid chain: Chromosomal replication initiator protein DnaA (459 aa).

Positions methionine 1–histidine 74 are domain I, interacts with DnaA modulators. Residues histidine 74 to threonine 117 are domain II. The tract at residues glutamate 118–isoleucine 334 is domain III, AAA+ region. Positions 162, 164, 165, and 166 each coordinate ATP. Residues serine 335 to proline 459 form a domain IV, binds dsDNA region.

This sequence belongs to the DnaA family. As to quaternary structure, oligomerizes as a right-handed, spiral filament on DNA at oriC.

The protein localises to the cytoplasm. Functionally, plays an essential role in the initiation and regulation of chromosomal replication. ATP-DnaA binds to the origin of replication (oriC) to initiate formation of the DNA replication initiation complex once per cell cycle. Binds the DnaA box (a 9 base pair repeat at the origin) and separates the double-stranded (ds)DNA. Forms a right-handed helical filament on oriC DNA; dsDNA binds to the exterior of the filament while single-stranded (ss)DNA is stabiized in the filament's interior. The ATP-DnaA-oriC complex binds and stabilizes one strand of the AT-rich DNA unwinding element (DUE), permitting loading of DNA polymerase. After initiation quickly degrades to an ADP-DnaA complex that is not apt for DNA replication. Binds acidic phospholipids. The chain is Chromosomal replication initiator protein DnaA from Nostoc sp. (strain PCC 7120 / SAG 25.82 / UTEX 2576).